A 464-amino-acid polypeptide reads, in one-letter code: Bifunctional protein GlmU (464 aa).

The segment at 1–231 is pyrophosphorylase; that stretch reads MDVVIMAAGK…ATQVAGVNSP (231 aa). Residues Lys20, Gln78, 83-84, 105-107, Gly142, Glu156, and Asn229 each bind UDP-N-acetyl-alpha-D-glucosamine; these read GT and SGD. Mg(2+) is bound at residue Asp107. Asn229 is a binding site for Mg(2+). Positions 232-252 are linker; that stretch reads VQLAALERAFQSKVALQLMEQ. Positions 253–464 are N-acetyltransferase; that stretch reads GVRLADPARL…SIANWKRPSK (212 aa). Arg343 and Lys361 together coordinate UDP-N-acetyl-alpha-D-glucosamine. His373 functions as the Proton acceptor in the catalytic mechanism. 2 residues coordinate UDP-N-acetyl-alpha-D-glucosamine: Tyr376 and Asn387. Residues Ala390, 396 to 397, Ser415, Gly433, and Arg450 contribute to the acetyl-CoA site; that span reads NY.

It in the N-terminal section; belongs to the N-acetylglucosamine-1-phosphate uridyltransferase family. The protein in the C-terminal section; belongs to the transferase hexapeptide repeat family. As to quaternary structure, homotrimer. Mg(2+) is required as a cofactor.

It is found in the cytoplasm. The enzyme catalyses alpha-D-glucosamine 1-phosphate + acetyl-CoA = N-acetyl-alpha-D-glucosamine 1-phosphate + CoA + H(+). It catalyses the reaction N-acetyl-alpha-D-glucosamine 1-phosphate + UTP + H(+) = UDP-N-acetyl-alpha-D-glucosamine + diphosphate. Its pathway is nucleotide-sugar biosynthesis; UDP-N-acetyl-alpha-D-glucosamine biosynthesis; N-acetyl-alpha-D-glucosamine 1-phosphate from alpha-D-glucosamine 6-phosphate (route II): step 2/2. It participates in nucleotide-sugar biosynthesis; UDP-N-acetyl-alpha-D-glucosamine biosynthesis; UDP-N-acetyl-alpha-D-glucosamine from N-acetyl-alpha-D-glucosamine 1-phosphate: step 1/1. The protein operates within bacterial outer membrane biogenesis; LPS lipid A biosynthesis. Functionally, catalyzes the last two sequential reactions in the de novo biosynthetic pathway for UDP-N-acetylglucosamine (UDP-GlcNAc). The C-terminal domain catalyzes the transfer of acetyl group from acetyl coenzyme A to glucosamine-1-phosphate (GlcN-1-P) to produce N-acetylglucosamine-1-phosphate (GlcNAc-1-P), which is converted into UDP-GlcNAc by the transfer of uridine 5-monophosphate (from uridine 5-triphosphate), a reaction catalyzed by the N-terminal domain. The protein is Bifunctional protein GlmU of Albidiferax ferrireducens (strain ATCC BAA-621 / DSM 15236 / T118) (Rhodoferax ferrireducens).